Here is a 491-residue protein sequence, read N- to C-terminus: Probable glycine dehydrogenase (decarboxylating) subunit 2 (491 aa).

An N6-(pyridoxal phosphate)lysine modification is found at Lys-273.

The protein belongs to the GcvP family. C-terminal subunit subfamily. As to quaternary structure, the glycine cleavage system is composed of four proteins: P, T, L and H. In this organism, the P 'protein' is a heterodimer of two subunits. Pyridoxal 5'-phosphate serves as cofactor.

The enzyme catalyses N(6)-[(R)-lipoyl]-L-lysyl-[glycine-cleavage complex H protein] + glycine + H(+) = N(6)-[(R)-S(8)-aminomethyldihydrolipoyl]-L-lysyl-[glycine-cleavage complex H protein] + CO2. Its function is as follows. The glycine cleavage system catalyzes the degradation of glycine. The P protein binds the alpha-amino group of glycine through its pyridoxal phosphate cofactor; CO(2) is released and the remaining methylamine moiety is then transferred to the lipoamide cofactor of the H protein. The sequence is that of Probable glycine dehydrogenase (decarboxylating) subunit 2 from Bacillus cereus (strain AH187).